The following is a 125-amino-acid chain: Fluoride-specific ion channel FluC (125 aa).

Helical transmembrane passes span 1–21 (MIQALLVAVGGAIGSLLRYYV), 32–52 (AFPWGTLAVNVVGCFVIGVFA), 68–88 (LLITGFLGGFTTFSAFSLDAI), and 101–121 (IYTVASVGLSMAAVMAGLAVM). The Na(+) site is built by glycine 75 and threonine 78.

Belongs to the fluoride channel Fluc/FEX (TC 1.A.43) family.

Its subcellular location is the cell inner membrane. It carries out the reaction fluoride(in) = fluoride(out). Its activity is regulated as follows. Na(+) is not transported, but it plays an essential structural role and its presence is essential for fluoride channel function. Its function is as follows. Fluoride-specific ion channel. Important for reducing fluoride concentration in the cell, thus reducing its toxicity. In Rhizobium leguminosarum bv. trifolii (strain WSM2304), this protein is Fluoride-specific ion channel FluC.